Reading from the N-terminus, the 494-residue chain is BTB/POZ domain and ankyrin repeat-containing protein NH5.2 (494 aa).

The BTB domain occupies 25–131; it reads SDVAFSVEGR…LYSGQASVAA (107 aa). The interval 60–95 is disordered; it reads NHQPPPPPPPPLNWPTAGGGGGGSGGGGRGGAGGGG. Residues 61–72 show a composition bias toward pro residues; that stretch reads HQPPPPPPPPLN. Residues 76-95 are compositionally biased toward gly residues; it reads AGGGGGGSGGGGRGGAGGGG. The C2HC NPR-type zinc-finger motif lies at 137–151; the sequence is LPGCGARGCWHTRCG. The Zn(2+) site is built by Cys-140, Cys-145, His-147, and Cys-150. ANK repeat units lie at residues 275 to 303, 304 to 334, 339 to 368, and 372 to 406; these read NKIR…GLDL, DDAL…DVNS, TGKT…DPNS, and DGVT…KLRL. Disordered stretches follow at residues 421-443 and 471-494; these read DDGA…PRSD and GEGR…NGFA.

This sequence belongs to the plant 'ANKYRIN-BTB/POZ' family. 'NOOT-BOP-COCH-like' (NBCL) subfamily. As to quaternary structure, homodimer. Interacts with TGAL5, TGAL7, TGAL8 and TGAL9.

Its subcellular location is the nucleus. It localises to the cytoplasm. The protein operates within protein modification; protein ubiquitination. In terms of biological role, may act as a substrate-specific adapter of an E3 ubiquitin-protein ligase complex (CUL3-RBX1-BTB) which mediates the ubiquitination and subsequent proteasomal degradation of target proteins. Transcriptional co-regulator involved in the promotion of leaf and floral meristem fate and determinacy. Required for the abscission of senescent organs, probably by regulating the cell wall disorganization in abscission zones (AZs, e.g. pulvini at the base of leaves). This is BTB/POZ domain and ankyrin repeat-containing protein NH5.2 from Oryza sativa subsp. japonica (Rice).